The chain runs to 346 residues: Biotin synthase (346 aa).

A Radical SAM core domain is found at 38-256 (RQVQVSTLLS…IAVARIMMPT (219 aa)). Residues Cys53, Cys57, and Cys60 each contribute to the [4Fe-4S] cluster site. 4 residues coordinate [2Fe-2S] cluster: Cys97, Cys128, Cys188, and Arg260.

The protein belongs to the radical SAM superfamily. Biotin synthase family. Homodimer. [4Fe-4S] cluster serves as cofactor. [2Fe-2S] cluster is required as a cofactor.

It carries out the reaction (4R,5S)-dethiobiotin + (sulfur carrier)-SH + 2 reduced [2Fe-2S]-[ferredoxin] + 2 S-adenosyl-L-methionine = (sulfur carrier)-H + biotin + 2 5'-deoxyadenosine + 2 L-methionine + 2 oxidized [2Fe-2S]-[ferredoxin]. The protein operates within cofactor biosynthesis; biotin biosynthesis; biotin from 7,8-diaminononanoate: step 2/2. Catalyzes the conversion of dethiobiotin (DTB) to biotin by the insertion of a sulfur atom into dethiobiotin via a radical-based mechanism. This is Biotin synthase from Escherichia coli O6:K15:H31 (strain 536 / UPEC).